A 224-amino-acid chain; its full sequence is Cytochrome c oxidase subunit 2 (224 aa).

Over 1-26 the chain is Mitochondrial intermembrane; sequence MSTWGQMNLMDPASPIQIEMMLFHDH. Residues 27 to 48 traverse the membrane as a helical segment; the sequence is AMAILIGIFTLVSCLGVKLCFN. Over 49-62 the chain is Mitochondrial matrix; that stretch reads TLSTRTMHEAQLLE. Residues 63–82 traverse the membrane as a helical segment; the sequence is TLWTILPAFLLVWLALPSLR. Residues 83–224 are Mitochondrial intermembrane-facing; that stretch reads LLYLLDEQSS…DVKDFINMCN (142 aa). 6 residues coordinate Cu cation: His161, Cys196, Glu198, Cys200, His204, and Met207. Residue Glu198 participates in Mg(2+) binding.

It belongs to the cytochrome c oxidase subunit 2 family. In terms of assembly, component of the cytochrome c oxidase (complex IV, CIV), a multisubunit enzyme composed of a catalytic core of 3 subunits and several supernumerary subunits. The complex exists as a monomer or a dimer and forms supercomplexes (SCs) in the inner mitochondrial membrane with ubiquinol-cytochrome c oxidoreductase (cytochrome b-c1 complex, complex III, CIII). Cu cation serves as cofactor.

The protein localises to the mitochondrion inner membrane. The enzyme catalyses 4 Fe(II)-[cytochrome c] + O2 + 8 H(+)(in) = 4 Fe(III)-[cytochrome c] + 2 H2O + 4 H(+)(out). Component of the cytochrome c oxidase, the last enzyme in the mitochondrial electron transport chain which drives oxidative phosphorylation. The respiratory chain contains 3 multisubunit complexes succinate dehydrogenase (complex II, CII), ubiquinol-cytochrome c oxidoreductase (cytochrome b-c1 complex, complex III, CIII) and cytochrome c oxidase (complex IV, CIV), that cooperate to transfer electrons derived from NADH and succinate to molecular oxygen, creating an electrochemical gradient over the inner membrane that drives transmembrane transport and the ATP synthase. Cytochrome c oxidase is the component of the respiratory chain that catalyzes the reduction of oxygen to water. Electrons originating from reduced cytochrome c in the intermembrane space (IMS) are transferred via the dinuclear copper A center (CU(A)) of subunit 2 and heme A of subunit 1 to the active site in subunit 1, a binuclear center (BNC) formed by heme A3 and copper B (CU(B)). The BNC reduces molecular oxygen to 2 water molecules using 4 electrons from cytochrome c in the IMS and 4 protons from the mitochondrial matrix. This Albinaria turrita (Door snail) protein is Cytochrome c oxidase subunit 2 (COII).